The primary structure comprises 63 residues: Large ribosomal subunit protein uL29 (63 aa).

It belongs to the universal ribosomal protein uL29 family.

This chain is Large ribosomal subunit protein uL29, found in Sodalis glossinidius (strain morsitans).